A 402-amino-acid polypeptide reads, in one-letter code: Ferrochelatase, mitochondrial (402 aa).

The N-terminal 33 residues, 1–33 (MAAAGRAARPLVAGGRQLRVPLRWRGQVAAAAP), are a transit peptide targeting the mitochondrion. Residues R94, Y102, and S109 each coordinate protoporphyrin IX. C175 provides a ligand contact to [2Fe-2S] cluster. Active-site residues include H209 and D362. 3 residues coordinate [2Fe-2S] cluster: C382, C385, and C390.

It belongs to the ferrochelatase family. In terms of assembly, homodimer. Homotetramer. Requires [2Fe-2S] cluster as cofactor.

The protein localises to the mitochondrion inner membrane. The catalysed reaction is heme b + 2 H(+) = protoporphyrin IX + Fe(2+). The protein operates within porphyrin-containing compound metabolism; protoheme biosynthesis; protoheme from protoporphyrin-IX: step 1/1. Its function is as follows. Catalyzes the ferrous insertion into protoporphyrin IX. The chain is Ferrochelatase, mitochondrial from Gallus gallus (Chicken).